A 382-amino-acid chain; its full sequence is Bifunctional enzyme IspD/IspF (382 aa).

The segment at 1–226 (MTLAVLIVAA…RSTMDNIPDI (226 aa)) is 2-C-methyl-D-erythritol 4-phosphate cytidylyltransferase. Positions 227-382 (RLGNGYDVHR…ALATATLVRA (156 aa)) are 2-C-methyl-D-erythritol 2,4-cyclodiphosphate synthase. The a divalent metal cation site is built by D233 and H235. 4-CDP-2-C-methyl-D-erythritol 2-phosphate contacts are provided by residues 233 to 235 (DVH) and 259 to 260 (HS). Residue H267 participates in a divalent metal cation binding. 4-CDP-2-C-methyl-D-erythritol 2-phosphate-binding positions include 281–283 (DIG), 357–360 (TTSE), F364, and R367.

The protein in the N-terminal section; belongs to the IspD/TarI cytidylyltransferase family. IspD subfamily. In the C-terminal section; belongs to the IspF family. A divalent metal cation is required as a cofactor.

It catalyses the reaction 2-C-methyl-D-erythritol 4-phosphate + CTP + H(+) = 4-CDP-2-C-methyl-D-erythritol + diphosphate. The enzyme catalyses 4-CDP-2-C-methyl-D-erythritol 2-phosphate = 2-C-methyl-D-erythritol 2,4-cyclic diphosphate + CMP. It functions in the pathway isoprenoid biosynthesis; isopentenyl diphosphate biosynthesis via DXP pathway; isopentenyl diphosphate from 1-deoxy-D-xylulose 5-phosphate: step 2/6. Its pathway is isoprenoid biosynthesis; isopentenyl diphosphate biosynthesis via DXP pathway; isopentenyl diphosphate from 1-deoxy-D-xylulose 5-phosphate: step 4/6. Functionally, bifunctional enzyme that catalyzes the formation of 4-diphosphocytidyl-2-C-methyl-D-erythritol from CTP and 2-C-methyl-D-erythritol 4-phosphate (MEP) (IspD), and catalyzes the conversion of 4-diphosphocytidyl-2-C-methyl-D-erythritol 2-phosphate (CDP-ME2P) to 2-C-methyl-D-erythritol 2,4-cyclodiphosphate (ME-CPP) with a corresponding release of cytidine 5-monophosphate (CMP) (IspF). The chain is Bifunctional enzyme IspD/IspF from Ruegeria sp. (strain TM1040) (Silicibacter sp.).